Consider the following 116-residue polypeptide: Small ribosomal subunit protein eS24 (116 aa).

A disordered region spans residues 81 to 116; the sequence is IEPEHMVERHKKVLEELESESEESEESESEESEEEE. Positions 96 to 116 are enriched in acidic residues; it reads ELESESEESEESESEESEEEE.

Belongs to the eukaryotic ribosomal protein eS24 family.

The chain is Small ribosomal subunit protein eS24 from Methanopyrus kandleri (strain AV19 / DSM 6324 / JCM 9639 / NBRC 100938).